Here is a 513-residue protein sequence, read N- to C-terminus: Butyrophilin subfamily 3 member A1 (513 aa).

The first 29 residues, Met1–Ala29, serve as a signal peptide directing secretion. Ig-like V-type domains are found at residues Gln30–Val139 and Ala145–Ser236. The Extracellular portion of the chain corresponds to Gln30 to Gly254. 2 disulfides stabilise this stretch: Cys52–Cys126 and Cys166–Cys220. An N-linked (GlcNAc...) asparagine glycan is attached at Asn115. Residues Thr255–Trp271 form a helical membrane-spanning segment. Topologically, residues Gln272–Ala513 are cytoplasmic. In terms of domain architecture, B30.2/SPRY spans Arg322 to Ala513.

This sequence belongs to the immunoglobulin superfamily. BTN/MOG family. As to quaternary structure, homodimer. Post-translationally, N-glycosylated. As to expression, detected on T-cells, natural killer cells, dendritic cells and macrophages (at protein level). Ubiquitous. Highly expressed in heart, pancreas and lung, Moderately expressed in placenta, liver and muscle.

The protein localises to the cell membrane. Its function is as follows. Plays a role in T-cell activation and in the adaptive immune response. Regulates the proliferation of activated T-cells. Regulates the release of cytokines and IFNG by activated T-cells. Mediates the response of T-cells toward infected and transformed cells that are characterized by high levels of phosphorylated metabolites, such as isopentenyl pyrophosphate. This chain is Butyrophilin subfamily 3 member A1 (BTN3A1), found in Homo sapiens (Human).